Consider the following 451-residue polypeptide: uncharacterized protein (451 aa).

The tract at residues 1-451 (MSETENKTTT…KKEAAKNKSK (451 aa)) is disordered. Low complexity predominate over residues 9–22 (TTETPTTTDSTVTT). Over residues 44-54 (VKNQLSNTRTR) the composition is skewed to polar residues. Over residues 73 to 99 (KLIDTKERKEKKEKKEKEPKEPKEPKE) the composition is skewed to basic and acidic residues. Residues 114 to 147 (GDEEEDEEKEEDEEQKEEQSQEEDSEESEEEQNS) are compositionally biased toward acidic residues. A compositionally biased stretch (basic residues) spans 152-162 (KKKKKQAKKVA). Basic and acidic residues-rich tracts occupy residues 163–192 (KKETEPKKKEAKPKKEAKPKKETTKKEKEA), 199–210 (STEKKEKEEKPK), and 217–230 (KKDQAAAEKKKDGD). The span at 232-244 (STTTTATATTTTD) shows a compositional bias: low complexity. 2 stretches are compositionally biased toward basic and acidic residues: residues 284 to 303 (TEEKKDEEKSEEKEKKETKK) and 311 to 340 (AAAEKKKTAANPTDKKDGENKDVTPSDDKP). Low complexity predominate over residues 341 to 355 (AATTTTTTAAAATTT). Residues 356–383 (EEPKEKITKPAADKKKAPANKKAEKDQS) are compositionally biased toward basic and acidic residues. Positions 393–425 (TTTATTTTTNKDATAPTTTTNKDATAPTTTTTK) are enriched in low complexity. Residues 441-451 (PKKEAAKNKSK) are compositionally biased toward basic and acidic residues.

This is an uncharacterized protein from Dictyostelium discoideum (Social amoeba).